The following is a 349-amino-acid chain: UDP-N-acetylenolpyruvoylglucosamine reductase (349 aa).

The FAD-binding PCMH-type domain occupies 17-187 (VNESADLIIQ…TAITLRLNKQ (171 aa)). Arg163 is a catalytic residue. Ser233 (proton donor) is an active-site residue. Glu328 is an active-site residue.

This sequence belongs to the MurB family. FAD serves as cofactor.

Its subcellular location is the cytoplasm. It catalyses the reaction UDP-N-acetyl-alpha-D-muramate + NADP(+) = UDP-N-acetyl-3-O-(1-carboxyvinyl)-alpha-D-glucosamine + NADPH + H(+). It participates in cell wall biogenesis; peptidoglycan biosynthesis. Functionally, cell wall formation. The protein is UDP-N-acetylenolpyruvoylglucosamine reductase of Aliivibrio fischeri (strain ATCC 700601 / ES114) (Vibrio fischeri).